A 931-amino-acid chain; its full sequence is Protocadherin gamma-A4 (931 aa).

The first 28 residues, 1 to 28 (MAAPPARPDHTRLLHICLLLGVLVEIRA), serve as a signal peptide directing secretion. 6 consecutive Cadherin domains span residues 29–133 (EQIR…PPSF), 134–242 (GTEQ…APVF), 243–347 (TQPE…APEV), 348–452 (TVTS…PPTF), 453–567 (PHAS…YPTF), and 570–682 (DDST…KPSA). Topologically, residues 29–692 (EQIRYSVFEE…DPDDSGLTLY (664 aa)) are extracellular. N-linked (GlcNAc...) asparagine glycosylation is found at Asn419 and Asn545. A helical membrane pass occupies residues 693-713 (LVVSVAAVSCVFLAFVTVLLA). The Cytoplasmic portion of the chain corresponds to 714 to 931 (LKLRRWHKSR…KKKSGKKEKK (218 aa)). Disordered stretches follow at residues 801 to 840 (KGDP…WPNN) and 901 to 931 (ATLT…KEKK). The span at 805–840 (NLQQAPPNTDWRFSQAQRPGTSGSQNGDDTGTWPNN) shows a compositional bias: polar residues. Residues 921–931 (NKKKSGKKEKK) are compositionally biased toward basic residues.

The protein localises to the cell membrane. In terms of biological role, potential calcium-dependent cell-adhesion protein. May be involved in the establishment and maintenance of specific neuronal connections in the brain. The sequence is that of Protocadherin gamma-A4 (PCDHGA4) from Pan troglodytes (Chimpanzee).